The following is a 237-amino-acid chain: MAKSRFEYVRQFEVHDALLPDTYIVVRVDGKKFHEFSKYYNFAKPNDERALKLMNAAAKNVFMQYKQEMICAYGESDEYSFILKRDTKLFNRRRDKISTLFVSLFTANYVSLWNLFFPDVVLHHKHLPYFDSRCVCYPNLTVVKDYLSWRFVDTHINNLYNTVFWYLIIKCGLTPQESEQKLCGTLSSDKQEILFSECGINYNNEPEMYKKGSLVNSKGEIVHIDVVKQIDEIFNGF.

Residues D29, G30, and D77 each coordinate Mg(2+). GTP-binding positions include 29-34 (DGKKFH) and 76-77 (SD).

This sequence belongs to the tRNA(His) guanylyltransferase family. Mg(2+) serves as cofactor.

The catalysed reaction is a 5'-end ribonucleotide-tRNA(His) + GTP + ATP + H2O = a 5'-end phospho-guanosine-ribonucleotide-tRNA(His) + AMP + 2 diphosphate + H(+). In terms of biological role, adds a GMP to the 5'-end of tRNA(His) after transcription and RNase P cleavage. This chain is tRNA(His) guanylyltransferase (THG1), found in Kluyveromyces lactis (strain ATCC 8585 / CBS 2359 / DSM 70799 / NBRC 1267 / NRRL Y-1140 / WM37) (Yeast).